We begin with the raw amino-acid sequence, 391 residues long: Adaptive-response sensory kinase SasA (391 aa).

The region spanning 169–391 (MLAHDLRSPL…CFHFTLPVCR (223 aa)) is the Histidine kinase domain. His172 is subject to Phosphohistidine; by autocatalysis.

As to quaternary structure, homooligomerizes. Interacts with KaiC. Participates in the KaiABC clock complex, whose core is composed of a KaiC homohexamer, 6 KaiB and up to 6 KaiA dimers. SasA and KaiB(fs) compete to bind to KaiC.

It carries out the reaction ATP + protein L-histidine = ADP + protein N-phospho-L-histidine.. In terms of biological role, member of the two-component regulatory system SasA/RpaA involved in genome-wide circadian gene expression. One of several clock output pathways. Participates in the Kai clock protein complex, the main circadian regulator in cyanobacteria, via its interaction with KaiC. KaiC enhances the autophosphorylation activity of SasA, which then transfers its phosphate group to RpaA to activate it. In addition to its output function, recruits fold-shifted KaiB (KaiB(fs)) to KaiC to cooperatively form the KaiB(6):KaiC(6) complex (independent of SasA kinase activity). Required for robustness of the circadian rhythm of gene expression and is involved in clock output, also required for adaptation to light/dark cycles. This Rippkaea orientalis (strain PCC 8801 / RF-1) (Cyanothece sp. (strain PCC 8801)) protein is Adaptive-response sensory kinase SasA.